The following is a 416-amino-acid chain: MSLVAIGINHKTATVDLREKVAFSPDKIHDAMKSLASRTRSGEAVIVSTCNRTELYCNNGDETDIIEWLEEYHGLEHQDVAPCLYNYHGQEAVRHLMRVASGLDSLILGEPQILGQVKQAFVKAKEAGTVALTIDRLFQNTFSVAKKVRTETEIGAAAVSVAFAAVSMAKHIFSSLSTTKVLLIGAGETIELVAKHLKDNGVASMVVANRTLERAQSMCEEFNATAITLAQIPDFLPKADIVISSTASPLPILGKGMVEKALKQRRHQPMLLVDIAVPRDIEPEVADLDDAFLYTVDDLHSIIEQNKASRKEAAEQAELITEEQSHLFMEWVRSLESVDSIREYRSQSMAIKDELVERALNKLAQGGDTEQVLVELANRLTNRLIHAPTQALTVASRQGDLNTLGQLRTALGLDKN.

Residues 49–52 (TCNR), Ser105, 110–112 (EPQ), and Gln116 contribute to the substrate site. Cys50 (nucleophile) is an active-site residue. An NADP(+)-binding site is contributed by 185–190 (GAGETI).

It belongs to the glutamyl-tRNA reductase family. In terms of assembly, homodimer.

The catalysed reaction is (S)-4-amino-5-oxopentanoate + tRNA(Glu) + NADP(+) = L-glutamyl-tRNA(Glu) + NADPH + H(+). Its pathway is porphyrin-containing compound metabolism; protoporphyrin-IX biosynthesis; 5-aminolevulinate from L-glutamyl-tRNA(Glu): step 1/2. Its function is as follows. Catalyzes the NADPH-dependent reduction of glutamyl-tRNA(Glu) to glutamate 1-semialdehyde (GSA). This chain is Glutamyl-tRNA reductase, found in Shewanella oneidensis (strain ATCC 700550 / JCM 31522 / CIP 106686 / LMG 19005 / NCIMB 14063 / MR-1).